A 304-amino-acid polypeptide reads, in one-letter code: Ornithine carbamoyltransferase (304 aa).

Carbamoyl phosphate contacts are provided by residues 51 to 54, Gln78, Arg102, and 129 to 132; these read STRT and HPVQ. L-ornithine-binding positions include Asn157, Asp221, and 225-226; that span reads SM. Carbamoyl phosphate is bound by residues 261–262 and Arg289; that span reads CL.

Belongs to the aspartate/ornithine carbamoyltransferase superfamily. OTCase family.

It localises to the cytoplasm. It catalyses the reaction carbamoyl phosphate + L-ornithine = L-citrulline + phosphate + H(+). It participates in amino-acid degradation; L-arginine degradation via ADI pathway; carbamoyl phosphate from L-arginine: step 2/2. Functionally, reversibly catalyzes the transfer of the carbamoyl group from carbamoyl phosphate (CP) to the N(epsilon) atom of ornithine (ORN) to produce L-citrulline. In Campylobacter curvus (strain 525.92), this protein is Ornithine carbamoyltransferase.